We begin with the raw amino-acid sequence, 457 residues long: Squalene epoxidase erg1 (457 aa).

Residues 15–16, 35–36, Arg43, Arg114, Val130, Asp293, and Met306 contribute to the FAD site; these read IT and ER. 3 helical membrane passes run 347–364, 409–429, and 433–453; these read GYSF…KLFT, FYAV…ALLM, and IIES…YILS.

Belongs to the squalene monooxygenase family. Requires FAD as cofactor.

It localises to the microsome membrane. Its subcellular location is the endoplasmic reticulum membrane. The protein resides in the vacuole membrane. The enzyme catalyses squalene + reduced [NADPH--hemoprotein reductase] + O2 = (S)-2,3-epoxysqualene + oxidized [NADPH--hemoprotein reductase] + H2O + H(+). The protein operates within terpene metabolism; lanosterol biosynthesis; lanosterol from farnesyl diphosphate: step 2/3. It participates in steroid metabolism; ergosterol biosynthesis. Activity is blocked by the allylamine class antifungal terbinafine. Its function is as follows. Squalene epoxidase; part of the third module of ergosterol biosynthesis pathway that includes by the late steps of the pathway. Erg1 catalyzes the epoxidation of squalene into 2,3-epoxysqualene. The third module or late pathway involves the ergosterol synthesis itself through consecutive reactions that mainly occur in the endoplasmic reticulum (ER) membrane. Firstly, the squalene synthase erg9 catalyzes the condensation of 2 farnesyl pyrophosphate moieties to form squalene, which is the precursor of all steroids. Secondly, squalene is converted into lanosterol by the consecutive action of the squalene epoxidase erg1 and the lanosterol synthase erg7. The lanosterol 14-alpha-demethylase erg11/cyp1 catalyzes C14-demethylation of lanosterol to produce 4,4'-dimethyl cholesta-8,14,24-triene-3-beta-ol. In the next steps, a complex process involving various demethylation, reduction and desaturation reactions catalyzed by the C-14 reductase erg24 and the C-4 demethylation complex erg25-erg26-erg27 leads to the production of zymosterol. Erg28 likely functions in the C-4 demethylation complex reaction by tethering erg26 and Erg27 to the endoplasmic reticulum or to facilitate interaction between these proteins. Then, the sterol 24-C-methyltransferase erg6 catalyzes the methyl transfer from S-adenosyl-methionine to the C-24 of zymosterol to form fecosterol. The C-8 sterol isomerase erg2 catalyzes the reaction which results in unsaturation at C-7 in the B ring of sterols and thus converts fecosterol to episterol. The sterol-C5-desaturases erg31 and erg32 then catalyze the introduction of a C-5 double bond in the B ring to produce 5-dehydroepisterol. The C-22 sterol desaturase erg5 further converts 5-dehydroepisterol into ergosta-5,7,22,24(28)-tetraen-3beta-ol by forming the C-22(23) double bond in the sterol side chain. Finally, ergosta-5,7,22,24(28)-tetraen-3beta-ol is substrate of the C-24(28) sterol reductase erg4 to produce ergosterol. In the genus Schizosaccharomyces, a second route exists between lanosterol and fecosterol, via the methylation of lanosterol to eburicol by erg6, followed by C14-demethylation by erg11/cyp1 and C4-demethylation by the demethylation complex erg25-erg26-erg27. The sequence is that of Squalene epoxidase erg1 from Schizosaccharomyces pombe (strain 972 / ATCC 24843) (Fission yeast).